The chain runs to 937 residues: Isoleucine--tRNA ligase (937 aa).

The 'HIGH' region signature appears at 58-68 (PYANGDIHIGH). Position 561 (glutamate 561) interacts with L-isoleucyl-5'-AMP. The short motif at 602-606 (KMSKS) is the 'KMSKS' region element. Lysine 605 contributes to the ATP binding site. Residues cysteine 900, cysteine 903, cysteine 920, and cysteine 923 each contribute to the Zn(2+) site.

The protein belongs to the class-I aminoacyl-tRNA synthetase family. IleS type 1 subfamily. As to quaternary structure, monomer. Requires Zn(2+) as cofactor.

Its subcellular location is the cytoplasm. It catalyses the reaction tRNA(Ile) + L-isoleucine + ATP = L-isoleucyl-tRNA(Ile) + AMP + diphosphate. Functionally, catalyzes the attachment of isoleucine to tRNA(Ile). As IleRS can inadvertently accommodate and process structurally similar amino acids such as valine, to avoid such errors it has two additional distinct tRNA(Ile)-dependent editing activities. One activity is designated as 'pretransfer' editing and involves the hydrolysis of activated Val-AMP. The other activity is designated 'posttransfer' editing and involves deacylation of mischarged Val-tRNA(Ile). This chain is Isoleucine--tRNA ligase, found in Alcanivorax borkumensis (strain ATCC 700651 / DSM 11573 / NCIMB 13689 / SK2).